We begin with the raw amino-acid sequence, 286 residues long: MRYLLFVTVLWAFSFNLIGEYLAGQVDSYFAVLTRVLLAGLVFLPLTRWRGVEPRFVGGVMLVGALQFGITYVCLYLSFNVLTVPEVLLFTVLTPVHVALFDDLLNRRFNFWALAAALVAVLGAAIIRYDGITGEFLQGFLLLQLANATFAAGQVLYKRLVRKYPSELPQRQRFGYFFVGALLVALPAWLLFGDPQRLPAGELQWGVLVWMGLLATALGQFWWNKGATEVDAGTLAVMNNLHVPVGLLLNLLIWNQHADLPRLALGGAVIVASLWVNRLGRREVRA.

EamA domains follow at residues 3–128 (YLLF…AIIR) and 139–277 (GFLL…LWVN). The next 10 helical transmembrane spans lie at 4-24 (LLFV…YLAG), 26-46 (VDSY…FLPL), 56-76 (FVGG…VCLY), 81-101 (VLTV…VALF), 109-129 (FNFW…IIRY), 136-156 (FLQG…GQVL), 174-194 (FGYF…LFGD), 203-223 (LQWG…QFWW), 234-254 (TLAV…LLIW), and 258-280 (ADLP…NRLG).

The protein belongs to the drug/metabolite transporter (DMT) superfamily. 10 TMS drug/metabolite exporter (DME) (TC 2.A.7.3) family.

The protein localises to the cell inner membrane. It catalyses the reaction biotin(in) = biotin(out). Its function is as follows. Uptake of biotin. In Pseudomonas aeruginosa (strain ATCC 15692 / DSM 22644 / CIP 104116 / JCM 14847 / LMG 12228 / 1C / PRS 101 / PAO1), this protein is Probable biotin transporter.